A 389-amino-acid polypeptide reads, in one-letter code: 5-amino-6-(D-ribitylamino)uracil--L-tyrosine 4-hydroxyphenyl transferase (389 aa).

A Radical SAM core domain is found at 56-298 (VSYVINRNIN…QAVARLFFGR (243 aa)). Positions 70, 74, and 77 each coordinate [4Fe-4S] cluster.

It belongs to the radical SAM superfamily. CofH family. Consists of two subunits, CofG and CofH. Requires [4Fe-4S] cluster as cofactor.

The catalysed reaction is 5-amino-6-(D-ribitylamino)uracil + L-tyrosine + S-adenosyl-L-methionine = 5-amino-5-(4-hydroxybenzyl)-6-(D-ribitylimino)-5,6-dihydrouracil + 2-iminoacetate + 5'-deoxyadenosine + L-methionine + H(+). Its pathway is cofactor biosynthesis; coenzyme F0 biosynthesis. Functionally, catalyzes the radical-mediated synthesis of 5-amino-5-(4-hydroxybenzyl)-6-(D-ribitylimino)-5,6-dihydrouracil from 5-amino-6-(D-ribitylamino)uracil and L-tyrosine. The polypeptide is 5-amino-6-(D-ribitylamino)uracil--L-tyrosine 4-hydroxyphenyl transferase (Gloeobacter violaceus (strain ATCC 29082 / PCC 7421)).